Here is a 368-residue protein sequence, read N- to C-terminus: Phosphate acyltransferase (368 aa).

The interval 337-368 (LGEGEHNAGGAGHASPAAGHHAEPSAAQSSKA) is disordered. Residues 349–368 (HASPAAGHHAEPSAAQSSKA) show a composition bias toward low complexity.

Belongs to the PlsX family. In terms of assembly, homodimer. Probably interacts with PlsY.

The protein resides in the cytoplasm. It catalyses the reaction a fatty acyl-[ACP] + phosphate = an acyl phosphate + holo-[ACP]. The protein operates within lipid metabolism; phospholipid metabolism. Functionally, catalyzes the reversible formation of acyl-phosphate (acyl-PO(4)) from acyl-[acyl-carrier-protein] (acyl-ACP). This enzyme utilizes acyl-ACP as fatty acyl donor, but not acyl-CoA. This is Phosphate acyltransferase from Burkholderia lata (strain ATCC 17760 / DSM 23089 / LMG 22485 / NCIMB 9086 / R18194 / 383).